Here is a 100-residue protein sequence, read N- to C-terminus: Large ribosomal subunit protein uL23 (100 aa).

Belongs to the universal ribosomal protein uL23 family. Part of the 50S ribosomal subunit. Contacts protein L29, and trigger factor when it is bound to the ribosome.

One of the early assembly proteins it binds 23S rRNA. One of the proteins that surrounds the polypeptide exit tunnel on the outside of the ribosome. Forms the main docking site for trigger factor binding to the ribosome. In Synechococcus elongatus (strain ATCC 33912 / PCC 7942 / FACHB-805) (Anacystis nidulans R2), this protein is Large ribosomal subunit protein uL23.